The sequence spans 259 residues: Complement factor D (259 aa).

A signal peptide spans 1–21; the sequence is MADRSLHLVVLILLGTALCAA. The propeptide at 22-26 is activation peptide; sequence QPRGR. Residues 27-254 form the Peptidase S1 domain; the sequence is ILRGQEAPSH…YVAWIDGVMA (228 aa). A disulfide bond links Cys-52 and Cys-68. Residues His-67 and Asp-115 each act as charge relay system in the active site. 3 disulfides stabilise this stretch: Cys-149/Cys-215, Cys-180/Cys-196, and Cys-205/Cys-230. The Charge relay system role is filled by Ser-209. The self-inhibitor loop stretch occupies residues 224–228; sequence TSGSR.

The protein belongs to the peptidase S1 family. In terms of processing, CFD is activated by the removal of 5 residues at the N-terminus, named activation peptide, by the MASP-3 isoform of MASP1.

The protein localises to the secreted. The catalysed reaction is Selective cleavage of Arg-|-Lys bond in complement factor B when in complex with complement subcomponent C3b or with cobra venom factor.. Circulates in plasma in a mature but self-inhibited form. Activated by factor B (CFB), which displaces the self-inhibition loop. Associates with CFB complexed with complement C3b. Its function is as follows. Serine protease that initiates the alternative pathway of the complement system, a cascade of proteins that leads to phagocytosis and breakdown of pathogens and signaling that strengthens the adaptive immune system. In contrast to other complement pathways (classical, lectin and GZMK) that are directly activated by pathogens or antigen-antibody complexes, the alternative complement pathway is initiated by the spontaneous hydrolysis of complement C3. The alternative complement pathway acts as an amplification loop that enhances complement activation by mediating the formation of C3 and C5 convertases. Activated CFD cleaves factor B (CFB) when the latter is complexed with complement C3b, activating the C3 convertase of the alternative pathway. The chain is Complement factor D (CFD) from Bos taurus (Bovine).